Reading from the N-terminus, the 428-residue chain is Glutamate-1-semialdehyde 2,1-aminomutase (428 aa).

Lys265 is modified (N6-(pyridoxal phosphate)lysine).

The protein belongs to the class-III pyridoxal-phosphate-dependent aminotransferase family. HemL subfamily. As to quaternary structure, homodimer. Pyridoxal 5'-phosphate is required as a cofactor.

It is found in the cytoplasm. The enzyme catalyses (S)-4-amino-5-oxopentanoate = 5-aminolevulinate. It functions in the pathway porphyrin-containing compound metabolism; protoporphyrin-IX biosynthesis; 5-aminolevulinate from L-glutamyl-tRNA(Glu): step 2/2. In Aeromonas hydrophila subsp. hydrophila (strain ATCC 7966 / DSM 30187 / BCRC 13018 / CCUG 14551 / JCM 1027 / KCTC 2358 / NCIMB 9240 / NCTC 8049), this protein is Glutamate-1-semialdehyde 2,1-aminomutase.